The primary structure comprises 532 residues: Nucleobase-ascorbate transporter 6 (532 aa).

The interval Met1–Pro24 is disordered. The span at Lys10–Lys20 shows a compositional bias: basic and acidic residues. 12 helical membrane passes run Ala39–Thr59, Val75–Thr95, Leu97–Ser117, Thr137–Trp157, Phe163–Phe185, Ile192–Val212, Phe223–Gly243, Phe289–Val309, Val361–Gly381, Ala392–Leu414, Phe426–Thr446, and Asp463–Leu483.

Belongs to the nucleobase:cation symporter-2 (NCS2) (TC 2.A.40) family. Expressed in the apical region of cotyledons 4 days after imbibition (DAI). Expressed in the whole vasculature at 12 DAI. Expressed in the root central cylinder and lateral root primordia. Expressed in the vasculature of sepals, filaments, carpels and developing siliques.

The protein resides in the membrane. This chain is Nucleobase-ascorbate transporter 6 (NAT6), found in Arabidopsis thaliana (Mouse-ear cress).